A 100-amino-acid polypeptide reads, in one-letter code: Replication restart protein PriB (100 aa).

The region spanning 1-100 is the SSB domain; that stretch reads MTNRMELSGT…VLHADNITQI (100 aa).

This sequence belongs to the PriB family. As to quaternary structure, homodimer. Interacts with PriA and DnaT. Component of the replication restart primosome. Primosome assembly occurs via a 'hand-off' mechanism. PriA binds to replication forks, subsequently PriB then DnaT bind; DnaT then displaces ssDNA to generate the helicase loading substrate.

In terms of biological role, involved in the restart of stalled replication forks, which reloads the replicative helicase on sites other than the origin of replication; the PriA-PriB pathway is the major replication restart pathway. During primosome assembly it facilitates complex formation between PriA and DnaT on DNA; stabilizes PriA on DNA. Stimulates the DNA unwinding activity of PriA helicase. The polypeptide is Replication restart protein PriB (Vibrio parahaemolyticus serotype O3:K6 (strain RIMD 2210633)).